Reading from the N-terminus, the 474-residue chain is MTEELDNTPSPAGDIPQETLPKPLPAPEETAGEQPAAAPEENRGNAVREEEEAAPVLEQIDINELRKRPLNDLQEMAEGLPIRNAASLTKSQLVFELGKQLLAKGHEVVVSGVMEQAKDNYAMLRDPVKSFRTSPDDIYLGGNLIKPLHLRVGQQIKVRLRKLRPHDKYLSAASVISVEDIPAEDYRARSDFERLTPLFPKERLLLENKGVNSAAMRVLDLMTPFGKGQRGLIVAPPRGGKTVLLKTIARSIRANYPEVELIVLLLDERPEEVTDFEETVDAPVFASTFDEPSRRHAQVSDLVIERAKRLVEMGRDVVILLDSLTRLARGYNANQTGGRIMSGGLGSNALEKPRKFFSAARNVEEGGSLTIIATCLVDTESRMDEVIFEEFKGTGNLEIRLDRELSERRIYPAISLSQSGTRNDDRLYNEQEFVKIMQLRRQLAMKPGWEGLQTLLQNISKTQNNAELLLTGLR.

Positions 1–60 (MTEELDNTPSPAGDIPQETLPKPLPAPEETAGEQPAAAPEENRGNAVREEEEAAPVLEQI) are disordered. A Rho RNA-BD domain is found at 107–182 (EVVVSGVMEQ…ASVISVEDIP (76 aa)). ATP is bound by residues 226 to 231 (GKGQRG), 238 to 243 (RGGKTV), and Arg-269.

The protein belongs to the Rho family. As to quaternary structure, homohexamer. The homohexamer assembles into an open ring structure.

In terms of biological role, facilitates transcription termination by a mechanism that involves Rho binding to the nascent RNA, activation of Rho's RNA-dependent ATPase activity, and release of the mRNA from the DNA template. The chain is Transcription termination factor Rho from Akkermansia muciniphila (strain ATCC BAA-835 / DSM 22959 / JCM 33894 / BCRC 81048 / CCUG 64013 / CIP 107961 / Muc).